We begin with the raw amino-acid sequence, 1827 residues long: Laminin subunit beta-4 (1827 aa).

The N-terminal stretch at 1–21 (MLLRLELSALLLLLIAAPVRL) is a signal peptide. Residues 26–266 (VGNSCYPNLG…ALYEMVVRGS (241 aa)) form the Laminin N-terminal domain. An N-linked (GlcNAc...) asparagine glycan is attached at Asn231. Intrachain disulfides connect Cys267–Cys276, Cys269–Cys297, Cys299–Cys308, Cys311–Cys331, Cys334–Cys343, Cys336–Cys361, Cys364–Cys373, Cys376–Cys394, Cys397–Cys410, Cys399–Cys417, Cys419–Cys428, Cys431–Cys446, Cys449–Cys463, Cys451–Cys470, Cys472–Cys481, Cys484–Cys498, Cys501–Cys513, Cys503–Cys520, and Cys522–Cys531. 4 Laminin EGF-like domains span residues 267–333 (CFCN…VCKR), 334–396 (CNCH…ACIP), 397–448 (CDCD…GCQL), and 449–500 (CRCN…GCIP). In terms of domain architecture, Laminin EGF-like 5; truncated spans 501 to 544 (CDCDIGGALKTECSSVDGQCKCRPNMVGQKCNDPAPGYFLAPLD). The 308-residue stretch at 540–847 (LAPLDFYIYE…LIGSMSAFIH (308 aa)) folds into the Laminin IV type B domain. 32 cysteine pairs are disulfide-bonded: Cys853-Cys865, Cys855-Cys872, Cys874-Cys883, Cys886-Cys898, Cys901-Cys913, Cys903-Cys920, Cys922-Cys931, Cys934-Cys944, Cys947-Cys956, Cys949-Cys963, Cys966-Cys975, Cys978-Cys992, Cys995-Cys1011, Cys997-Cys1022, Cys1024-Cys1033, Cys1036-Cys1051, Cys1054-Cys1068, Cys1056-Cys1075, Cys1078-Cys1087, Cys1090-Cys1103, Cys1106-Cys1126, Cys1108-Cys1133, Cys1135-Cys1144, Cys1147-Cys1160, Cys1163-Cys1175, Cys1165-Cys1182, Cys1184-Cys1193, Cys1196-Cys1208, Cys1211-Cys1223, Cys1213-Cys1230, Cys1232-Cys1241, and Cys1244-Cys1255. Laminin EGF-like domains follow at residues 853–900 (CNCH…GCSP), 901–946 (CDCD…LCRR), 947–994 (CQCN…PCEP), 995–1053 (CLCP…RCKE), 1054–1105 (CCCN…DCKE), 1106–1162 (CSCD…GCQP), 1163–1210 (CNCN…QCMF), and 1211–1257 (CDCN…ACEP). Residue Asn1001 is glycosylated (N-linked (GlcNAc...) asparagine). Residues 1258-1449 (CHACNHLWEK…LSAANINEEV (192 aa)) are domain II. 2 coiled-coil regions span residues 1294–1335 (ELQH…EIID) and 1385–1449 (NKIK…NEEV). The N-linked (GlcNAc...) asparagine glycan is linked to Asn1329. The domain alpha stretch occupies residues 1450–1476 (CGAPGDAECEKAKCGGALCGKCGGPDC). Residues 1477–1827 (TGSLPISLNA…KVQRYNLCSP (351 aa)) are domain I. 14 N-linked (GlcNAc...) asparagine glycosylation sites follow: Asn1485, Asn1496, Asn1513, Asn1533, Asn1599, Asn1629, Asn1644, Asn1672, Asn1686, Asn1702, Asn1726, Asn1745, Asn1750, and Asn1761. Coiled coils occupy residues 1485 to 1554 (NASK…EKVK) and 1584 to 1820 (DEIK…DKVQ).

As to quaternary structure, laminin is a complex glycoprotein, consisting of three different polypeptide chains (alpha, beta, gamma), which are bound to each other by disulfide bonds into a cross-shaped molecule comprising one long and three short arms with globules at each end.

It localises to the secreted. It is found in the extracellular space. The protein resides in the extracellular matrix. Its subcellular location is the basement membrane. In terms of biological role, binding to cells via a high affinity receptor, laminin is thought to mediate the attachment, migration and organization of cells into tissues during embryonic development by interacting with other extracellular matrix components. Positively regulates apical-basal distribution of Muller glia cells in the retina. In Danio rerio (Zebrafish), this protein is Laminin subunit beta-4 (lamb4).